A 1387-amino-acid chain; its full sequence is Mediator of RNA polymerase II transcription subunit 13 (1387 aa).

Disordered regions lie at residues 81 to 102 (ELNN…PEFS), 354 to 400 (HSAN…ESYS), and 620 to 676 (SVNS…DIPM). Polar residues-rich tracts occupy residues 354–367 (HSAN…STGE) and 390–400 (SRQNFPTESYS).

The protein belongs to the Mediator complex subunit 13 family. As to quaternary structure, component of the SRB8-11 complex, which itself associates with the Mediator complex.

The protein localises to the nucleus. Component of the SRB8-11 complex. The SRB8-11 complex is a regulatory module of the Mediator complex which is itself involved in regulation of basal and activated RNA polymerase II-dependent transcription. The SRB8-11 complex may be involved in the transcriptional repression of a subset of genes regulated by Mediator. It may inhibit the association of the Mediator complex with RNA polymerase II to form the holoenzyme complex. In Kluyveromyces lactis (strain ATCC 8585 / CBS 2359 / DSM 70799 / NBRC 1267 / NRRL Y-1140 / WM37) (Yeast), this protein is Mediator of RNA polymerase II transcription subunit 13 (SSN2).